The sequence spans 317 residues: Ribosomal protein L11 methyltransferase (317 aa).

Residues threonine 158, glycine 179, aspartate 201, and asparagine 244 each coordinate S-adenosyl-L-methionine.

Belongs to the methyltransferase superfamily. PrmA family.

Its subcellular location is the cytoplasm. It catalyses the reaction L-lysyl-[protein] + 3 S-adenosyl-L-methionine = N(6),N(6),N(6)-trimethyl-L-lysyl-[protein] + 3 S-adenosyl-L-homocysteine + 3 H(+). Its function is as follows. Methylates ribosomal protein L11. The protein is Ribosomal protein L11 methyltransferase of Streptococcus pyogenes serotype M12 (strain MGAS2096).